Here is a 394-residue protein sequence, read N- to C-terminus: GTPase Obg (394 aa).

The Obg domain occupies 5 to 163; that stretch reads SNFVDYVKIY…RMVIMQLKML (159 aa). The disordered stretch occupies residues 26-45; sequence HFRREKYIPKGGPDGGDGGR. Positions 164–330 constitute an OBG-type G domain; the sequence is ADVGLVGFPN…LKDTLWKELS (167 aa). GTP-binding positions include 170–177, 195–199, 217–220, 284–287, and 311–313; these read GFPNAGKS, FTTLE, DIPG, TKCD, and SAV. Residues S177 and T197 each contribute to the Mg(2+) site.

This sequence belongs to the TRAFAC class OBG-HflX-like GTPase superfamily. OBG GTPase family. Monomer. It depends on Mg(2+) as a cofactor.

It localises to the cytoplasm. An essential GTPase which binds GTP, GDP and possibly (p)ppGpp with moderate affinity, with high nucleotide exchange rates and a fairly low GTP hydrolysis rate. Plays a role in control of the cell cycle, stress response, ribosome biogenesis and in those bacteria that undergo differentiation, in morphogenesis control. This Porphyromonas gingivalis (strain ATCC 33277 / DSM 20709 / CIP 103683 / JCM 12257 / NCTC 11834 / 2561) protein is GTPase Obg.